We begin with the raw amino-acid sequence, 372 residues long: Glutamate 5-kinase (372 aa).

Residue Lys14 coordinates ATP. The substrate site is built by Ser54, Asp141, and Asn153. ATP contacts are provided by residues 173–174 and 215–221; these read TD and TGGMLTK. In terms of domain architecture, PUA spans 280–358; that stretch reads AGRLVLDDGA…RDIERLLGYV (79 aa).

The protein belongs to the glutamate 5-kinase family.

It localises to the cytoplasm. It catalyses the reaction L-glutamate + ATP = L-glutamyl 5-phosphate + ADP. It participates in amino-acid biosynthesis; L-proline biosynthesis; L-glutamate 5-semialdehyde from L-glutamate: step 1/2. Catalyzes the transfer of a phosphate group to glutamate to form L-glutamate 5-phosphate. The sequence is that of Glutamate 5-kinase from Laribacter hongkongensis (strain HLHK9).